Consider the following 671-residue polypeptide: Putative ubiquitin thioesterase 232R (671 aa).

Disordered stretches follow at residues Glu-36 to Ser-62, Ser-100 to Gln-123, Asn-171 to Phe-203, and Glu-250 to Ser-319. A compositionally biased stretch (low complexity) spans Pro-110–Gln-123. Over residues Arg-182–Arg-200 the composition is skewed to pro residues. Low complexity predominate over residues Ser-255 to Lys-271. A compositionally biased stretch (basic residues) spans Pro-272–Ser-319. The OTU domain maps to Phe-392–Phe-521. Residue Asp-400 is part of the active site. Cys-403 (nucleophile) is an active-site residue. His-514 is a catalytic residue. Residues Lys-589–Pro-625 are disordered.

It catalyses the reaction Thiol-dependent hydrolysis of ester, thioester, amide, peptide and isopeptide bonds formed by the C-terminal Gly of ubiquitin (a 76-residue protein attached to proteins as an intracellular targeting signal).. In terms of biological role, hydrolase that can remove conjugated ubiquitin from proteins and may therefore play an important regulatory role at the level of protein turnover by preventing degradation. This chain is Putative ubiquitin thioesterase 232R, found in Acheta domesticus (House cricket).